A 354-amino-acid chain; its full sequence is 3'-hydroxy-N-methyl-(S)-coclaurine 4'-O-methyltransferase 1 (354 aa).

Residue D223 participates in S-adenosyl-L-methionine binding. The active-site Proton acceptor is the H261.

The protein belongs to the class I-like SAM-binding methyltransferase superfamily. Cation-independent O-methyltransferase family. COMT subfamily. In terms of tissue distribution, expressed in roots, stems, leaves and flowers. Restricted to sieve elements of the phloem adjacent or proximal to laticifers.

The catalysed reaction is (S)-3'-hydroxy-N-methylcoclaurine + S-adenosyl-L-methionine = (S)-reticuline + S-adenosyl-L-homocysteine + H(+). The protein operates within alkaloid biosynthesis; (S)-reticuline biosynthesis; (S)-reticuline from (S)-norcoclaurine: step 4/4. In terms of biological role, involved in the biosynthesis of benzylisoquinoline alkaloids. Catalyzes the transfer of the methyl group to the 4'-hydroxyl group of 3'-hydroxy-N-methylcoclaurine to form reticuline. Also involved in the papaverine biosynthesis. This chain is 3'-hydroxy-N-methyl-(S)-coclaurine 4'-O-methyltransferase 1, found in Papaver somniferum (Opium poppy).